The primary structure comprises 134 residues: kinetoplast-associated protein 3 (134 aa).

The propeptide occupies 1-10 (MLRRSPTLLR). The segment covering 106–124 (PKAPKAAKSASSKVKTAAK) has biased composition (low complexity). Residues 106–134 (PKAPKAAKSASSKVKTAAKTAKKTTAARK) form a disordered region. The span at 125–134 (TAKKTTAARK) shows a compositional bias: basic residues.

It belongs to the KAP family. Associates with the kinetoplast DNA network.

The protein resides in the mitochondrion matrix. It localises to the kinetoplast. Its function is as follows. Histone H1-like DNA-binding protein involved in the organization and segregation of kinetoplast DNA (kDNA). The mitochondrial DNA of kinetoplastid protozoa consists of about 5,000 minicircles and 20 to 30 maxicircles. These circular DNAs are held together by catenation into a highly organized compact disk structure referred to as a kinetoplast DNA (kDNA) network. Binds preferentially to a specific fragment of minicircle DNA and is able to compact kDNA networks through DNA charge neutralization and condensation. In Crithidia fasciculata, this protein is kinetoplast-associated protein 3 (KAP3).